The sequence spans 446 residues: Zinc finger protein 19 (446 aa).

In terms of domain architecture, KRAB spans 2-73 (VTFEDVAVHF…EAQDDPPAET (72 aa)). 9 consecutive C2H2-type zinc fingers follow at residues 149-171 (FICE…QRIH), 177-199 (FECS…QRIH), 205-227 (YQCE…QRIH), 233-255 (YYCT…QRIH), 261-283 (YECN…QKIH), 289-311 (YECN…QRIH), 317-339 (YSCK…QRIH), 345-367 (FDCV…LRIH), and 373-395 (YVCD…QRIH). The segment at 401-423 (YEYSKYEKAFGTSSQLGHLEHVH) adopts a C2H2-type 10; degenerate zinc-finger fold.

Belongs to the krueppel C2H2-type zinc-finger protein family.

It is found in the nucleus. In terms of biological role, may be involved in transcriptional regulation. The sequence is that of Zinc finger protein 19 (ZNF19) from Pongo abelii (Sumatran orangutan).